The sequence spans 301 residues: Ribosomal RNA small subunit methyltransferase H (301 aa).

S-adenosyl-L-methionine is bound by residues G25–H27, D45, F72, D94, and Q101.

Belongs to the methyltransferase superfamily. RsmH family.

It localises to the cytoplasm. It carries out the reaction cytidine(1402) in 16S rRNA + S-adenosyl-L-methionine = N(4)-methylcytidine(1402) in 16S rRNA + S-adenosyl-L-homocysteine + H(+). Specifically methylates the N4 position of cytidine in position 1402 (C1402) of 16S rRNA. The sequence is that of Ribosomal RNA small subunit methyltransferase H from Methylococcus capsulatus (strain ATCC 33009 / NCIMB 11132 / Bath).